Reading from the N-terminus, the 319-residue chain is Formimidoylglutamase (319 aa).

His127, Asp150, His152, Asp154, Asp242, and Asp244 together coordinate Mn(2+).

It belongs to the arginase family. The cofactor is Mn(2+).

It carries out the reaction N-formimidoyl-L-glutamate + H2O = formamide + L-glutamate. It participates in amino-acid degradation; L-histidine degradation into L-glutamate; L-glutamate from N-formimidoyl-L-glutamate (hydrolase route): step 1/1. Functionally, catalyzes the conversion of N-formimidoyl-L-glutamate to L-glutamate and formamide. This chain is Formimidoylglutamase, found in Halalkalibacterium halodurans (strain ATCC BAA-125 / DSM 18197 / FERM 7344 / JCM 9153 / C-125) (Bacillus halodurans).